Reading from the N-terminus, the 128-residue chain is Profilin (128 aa).

It belongs to the profilin family.

Its function is as follows. More likely to influence phosphoinositide metabolism than actin assembly. The chain is Profilin from Homo sapiens (Human).